A 129-amino-acid polypeptide reads, in one-letter code: D-ribose pyranase (129 aa).

The active-site Proton donor is the histidine 20. Residues aspartate 28, histidine 96, and 118–120 (YAN) each bind substrate.

This sequence belongs to the RbsD / FucU family. RbsD subfamily. In terms of assembly, homodecamer.

It is found in the cytoplasm. The enzyme catalyses beta-D-ribopyranose = beta-D-ribofuranose. Its pathway is carbohydrate metabolism; D-ribose degradation; D-ribose 5-phosphate from beta-D-ribopyranose: step 1/2. Its function is as follows. Catalyzes the interconversion of beta-pyran and beta-furan forms of D-ribose. The polypeptide is D-ribose pyranase (Streptomyces avermitilis (strain ATCC 31267 / DSM 46492 / JCM 5070 / NBRC 14893 / NCIMB 12804 / NRRL 8165 / MA-4680)).